The sequence spans 773 residues: MLNGRLPLLRLGICRNMLSRPRLAKLPSIRFRSLVTPSSSQLIPLSRLCLRSPAVGKSLILQSFRCNSSKTVPETSLPSASPISKGSARSAHAKEQSKTDDYKDIIRLFMLAKRDWKLLLTAILLLTISCSIGMSIPKVIGIVLDTLKTSSGSDFFDLKIPIFSLPLYEFLSFFTVALLIGCAANFGRFILLRILSERVVARLRANVIKKTLHQDAEFFDNHKVGDLISRLGSDAYVVSRSMTQKVSDGVKALICGVVGVGMMCSLSPQLSILLLFFTPPVLFSASVFGKQIRNTSKDLQEATGQLTRVAEEQLSGIKTVQSFVAEGNELSRYNVAIRDIFQVGKTAAFTNAKFFTTTSLLGDLSFLTVLAYGSYLVLQSQLSIGDLTAFMLYTEYTGNAVFGLSTFYSEIMQGAGAASRLFELTDRKPSISPTVGHKYKPDRGVIEFKDVSFSYPTRPSVQIFKNLNFKIAPGSSVCIVGPSGRGKSTIALLLLRYYNPTTGTITIDNQDISKLNCKSLRRHIGIVQQEPVLMSGTIRDNITYGLTYTPTKEEIRSVAKQCFCHNFITKFPNTYDTVIGPHGTLLSGGQKQRIAIARALIKKPTILILDEATSALDVESEGAINYTFGQLMKSKSMTIVSIAHRLSTIRRSENVIVLGHDGSVVEMGKFKELYANPTSALSQLLNEKAAPGPSDQQLQIEKVIEKEDLNESKEHDDQKKDDNDDNDNNHDNDSNNQSPETKDNNSDDIEKSVEHLLKDAAKEANPIKITPQP.

The N-terminal 90 residues, 1 to 90 (MLNGRLPLLR…SPISKGSARS (90 aa)), are a transit peptide targeting the mitochondrion. A compositionally biased stretch (polar residues) spans 73–84 (PETSLPSASPIS). The interval 73–95 (PETSLPSASPISKGSARSAHAKE) is disordered. In terms of domain architecture, ABC transmembrane type-1 spans 119 to 413 (LLTAILLLTI…LSTFYSEIMQ (295 aa)). 3 consecutive transmembrane segments (helical) span residues 123 to 143 (ILLLTISCSIGMSIPKVIGIV), 170 to 192 (FLSFFTVALLIGCAANFGRFILL), and 257 to 277 (VVGVGMMCSLSPQLSILLLFF). ATP is bound at residue 481–488 (GPSGRGKS). One can recognise an ABC transporter domain in the interval 493–733 (LLLRYYNPTT…DDNDNNHDND (241 aa)). 2 stretches are compositionally biased toward basic and acidic residues: residues 706–733 (KEDLNESKEHDDQKKDDNDDNDNNHDND) and 740–762 (ETKDNNSDDIEKSVEHLLKDAAK). A disordered region spans residues 706–773 (KEDLNESKEH…ANPIKITPQP (68 aa)).

The protein belongs to the ABC transporter superfamily. ABCB family. Mitochondrial peptide exporter (TC 3.A.1.212) subfamily.

It localises to the mitochondrion inner membrane. This chain is ATP-dependent permease MDL2, mitochondrial (MDL2), found in Saccharomyces cerevisiae (strain ATCC 204508 / S288c) (Baker's yeast).